The sequence spans 480 residues: GTPase Obg (480 aa).

The Obg domain maps to 2-159; it reads TRFIDRVVIH…RDLTLELKTV (158 aa). Residues 160–341 form the OBG-type G domain; it reads ADVGLVGFPS…LTFALWDMVA (182 aa). Residues 166–173, 191–195, 212–215, 292–295, and 322–324 contribute to the GTP site; these read GFPSAGKS, FTTLA, DVPG, NKID, and STV. Mg(2+) contacts are provided by Ser173 and Thr193. In terms of domain architecture, OCT spans 359 to 437; it reads PIPVDETAFS…IGDMTFDWEP (79 aa). The disordered stretch occupies residues 441–480; sequence AGVDVPLTGRGTDVRLEQTDRVGADERKAARKARRQSGDE. The segment covering 452–468 has biased composition (basic and acidic residues); it reads TDVRLEQTDRVGADERK. Positions 469 to 480 are enriched in basic residues; the sequence is AARKARRQSGDE.

It belongs to the TRAFAC class OBG-HflX-like GTPase superfamily. OBG GTPase family. As to quaternary structure, monomer. Mg(2+) serves as cofactor.

It is found in the cytoplasm. Its function is as follows. An essential GTPase which binds GTP, GDP and possibly (p)ppGpp with moderate affinity, with high nucleotide exchange rates and a fairly low GTP hydrolysis rate. Plays a role in control of the cell cycle, stress response, ribosome biogenesis and in those bacteria that undergo differentiation, in morphogenesis control. In Mycolicibacterium vanbaalenii (strain DSM 7251 / JCM 13017 / BCRC 16820 / KCTC 9966 / NRRL B-24157 / PYR-1) (Mycobacterium vanbaalenii), this protein is GTPase Obg.